A 168-amino-acid chain; its full sequence is MTANTTPGKAFPVSWDQFHRDCRALTWRLNETGPFHAVVAITRGGLVPAAIVARELGVRVIDTVCIVSYDHNQKSELKVLKDISDATAKLGGGTGKGLLIVDDLVDTGATARVVRAMIPDAHFAAVYAKPLGKPLVDTFITEVSQDTWIYFPWDLDLAFAPPLRDGAA.

Residues Arg-43–Gly-44 and Asp-102–Thr-110 contribute to the 5-phospho-alpha-D-ribose 1-diphosphate site. Mg(2+) is bound at residue Asp-103. Positions 106 and 149 each coordinate guanine. Xanthine-binding residues include Asp-106 and Ile-149. GMP contacts are provided by residues Asp-106–Thr-110 and Trp-148–Ile-149.

The protein belongs to the purine/pyrimidine phosphoribosyltransferase family. XGPT subfamily. In terms of assembly, homotetramer. It depends on Mg(2+) as a cofactor.

The protein resides in the cell inner membrane. It carries out the reaction GMP + diphosphate = guanine + 5-phospho-alpha-D-ribose 1-diphosphate. It catalyses the reaction XMP + diphosphate = xanthine + 5-phospho-alpha-D-ribose 1-diphosphate. The catalysed reaction is IMP + diphosphate = hypoxanthine + 5-phospho-alpha-D-ribose 1-diphosphate. The protein operates within purine metabolism; GMP biosynthesis via salvage pathway; GMP from guanine: step 1/1. It participates in purine metabolism; XMP biosynthesis via salvage pathway; XMP from xanthine: step 1/1. Functionally, purine salvage pathway enzyme that catalyzes the transfer of the ribosyl-5-phosphate group from 5-phospho-alpha-D-ribose 1-diphosphate (PRPP) to the N9 position of the 6-oxopurines guanine and xanthine to form the corresponding ribonucleotides GMP (guanosine 5'-monophosphate) and XMP (xanthosine 5'-monophosphate), with the release of PPi. To a lesser extent, also acts on hypoxanthine. In Nitrobacter hamburgensis (strain DSM 10229 / NCIMB 13809 / X14), this protein is Xanthine-guanine phosphoribosyltransferase.